The following is a 228-amino-acid chain: 7-cyano-7-deazaguanine synthase (228 aa).

Residue 9–19 (YSGGLDSTTCM) participates in ATP binding. Residues cysteine 189, cysteine 199, cysteine 202, and cysteine 205 each coordinate Zn(2+).

It belongs to the QueC family. Zn(2+) is required as a cofactor.

It catalyses the reaction 7-carboxy-7-deazaguanine + NH4(+) + ATP = 7-cyano-7-deazaguanine + ADP + phosphate + H2O + H(+). Its pathway is purine metabolism; 7-cyano-7-deazaguanine biosynthesis. Its function is as follows. Catalyzes the ATP-dependent conversion of 7-carboxy-7-deazaguanine (CDG) to 7-cyano-7-deazaguanine (preQ(0)). This Geotalea uraniireducens (strain Rf4) (Geobacter uraniireducens) protein is 7-cyano-7-deazaguanine synthase.